Consider the following 1406-residue polypeptide: Ubiquitin carboxyl-terminal hydrolase 6 (1406 aa).

Positions Gly100–Gly292 constitute a Rab-GAP TBC domain. Positions Lys348–Thr380 are disordered. The region spanning Thr532–Gln1369 is the USP domain. Cys541 (nucleophile) is an active-site residue. The segment at His1120 to Asn1231 is disordered. Residues Glu1129–Leu1155 are compositionally biased toward basic and acidic residues. Residues Leu1156–Pro1197 show a composition bias toward low complexity. His1328 (proton acceptor) is an active-site residue. The tract at residues Lys1384–Gln1406 is disordered.

Belongs to the peptidase C19 family. In terms of assembly, interacts with RAC1 and CDC42. Interacts (via Rab-GAP TBC domain) with ARF6. Interacts with calmodulin (CALM1, CALM2 and/or CALM3); the interaction is calcium-dependent. Post-translationally, monubiquitinated; ubiquitination is calmodulin and calcium dependent. As to expression, testis specific. Expressed in various cancer cell lines.

It is found in the cell membrane. Its subcellular location is the cytoplasm. It localises to the endosome. The catalysed reaction is Thiol-dependent hydrolysis of ester, thioester, amide, peptide and isopeptide bonds formed by the C-terminal Gly of ubiquitin (a 76-residue protein attached to proteins as an intracellular targeting signal).. Its function is as follows. Deubiquitinase with an ATP-independent isopeptidase activity, cleaving at the C-terminus of the ubiquitin moiety. Catalyzes its own deubiquitination. In vitro, isoform 2, but not isoform 3, shows deubiquitinating activity. Promotes plasma membrane localization of ARF6 and selectively regulates ARF6-dependent endocytic protein trafficking. Is able to initiate tumorigenesis by inducing the production of matrix metalloproteinases following NF-kappa-B activation. May act as a GTPase-activating protein for RAB3A. This Homo sapiens (Human) protein is Ubiquitin carboxyl-terminal hydrolase 6 (USP6).